We begin with the raw amino-acid sequence, 182 residues long: NADH-quinone oxidoreductase subunit B 1 (182 aa).

[4Fe-4S] cluster-binding residues include cysteine 47, cysteine 48, cysteine 113, and cysteine 142.

The protein belongs to the complex I 20 kDa subunit family. In terms of assembly, NDH-1 is composed of 14 different subunits. Subunits NuoB, C, D, E, F, and G constitute the peripheral sector of the complex. The cofactor is [4Fe-4S] cluster.

The protein localises to the cell inner membrane. The catalysed reaction is a quinone + NADH + 5 H(+)(in) = a quinol + NAD(+) + 4 H(+)(out). In terms of biological role, NDH-1 shuttles electrons from NADH, via FMN and iron-sulfur (Fe-S) centers, to quinones in the respiratory chain. Couples the redox reaction to proton translocation (for every two electrons transferred, four hydrogen ions are translocated across the cytoplasmic membrane), and thus conserves the redox energy in a proton gradient. The polypeptide is NADH-quinone oxidoreductase subunit B 1 (Anaeromyxobacter dehalogenans (strain 2CP-C)).